We begin with the raw amino-acid sequence, 154 residues long: UPF0178 protein YaiI (154 aa).

Belongs to the UPF0178 family.

The polypeptide is UPF0178 protein YaiI (Escherichia coli (strain ATCC 8739 / DSM 1576 / NBRC 3972 / NCIMB 8545 / WDCM 00012 / Crooks)).